The following is a 387-amino-acid chain: Cysteine desulfurase (387 aa).

Pyridoxal 5'-phosphate-binding positions include 72–73, N152, Q180, and 200–202; these read GT and SAH. N6-(pyridoxal phosphate)lysine is present on K203. T238 lines the pyridoxal 5'-phosphate pocket. C323 acts as the Cysteine persulfide intermediate in catalysis. [2Fe-2S] cluster is bound at residue C323.

This sequence belongs to the class-V pyridoxal-phosphate-dependent aminotransferase family. NifS/IscS subfamily. In terms of assembly, homodimer. Requires pyridoxal 5'-phosphate as cofactor.

It carries out the reaction (sulfur carrier)-H + L-cysteine = (sulfur carrier)-SH + L-alanine. Catalyzes the removal of elemental sulfur atoms from cysteine to produce alanine. Seems to participate in the biosynthesis of the nitrogenase metalloclusters by providing the inorganic sulfur required for the Fe-S core formation. The chain is Cysteine desulfurase from Cereibacter sphaeroides (Rhodobacter sphaeroides).